The primary structure comprises 395 residues: tRNA-specific 2-thiouridylase MnmA (395 aa).

Residues 6–13 and Leu-32 each bind ATP; that span reads AMSGGVDS. Cys-101 serves as the catalytic Nucleophile. The cysteines at positions 101 and 193 are disulfide-linked. Gly-125 contributes to the ATP binding site. Positions 143-145 are interaction with tRNA; sequence KDQ. Cys-193 functions as the Cysteine persulfide intermediate in the catalytic mechanism.

It belongs to the MnmA/TRMU family.

The protein resides in the cytoplasm. The enzyme catalyses S-sulfanyl-L-cysteinyl-[protein] + uridine(34) in tRNA + AH2 + ATP = 2-thiouridine(34) in tRNA + L-cysteinyl-[protein] + A + AMP + diphosphate + H(+). In terms of biological role, catalyzes the 2-thiolation of uridine at the wobble position (U34) of tRNA, leading to the formation of s(2)U34. This is tRNA-specific 2-thiouridylase MnmA from Corynebacterium jeikeium (strain K411).